Reading from the N-terminus, the 230-residue chain is Lipopolysaccharide core heptose(II) kinase WaaY (230 aa).

The protein belongs to the protein kinase superfamily. RfaY/WaaY family.

The enzyme catalyses alpha-D-Glc-(1-&gt;3)-[L-alpha-D-Hep-(1-&gt;7)]-L-alpha-D-Hep-(1-&gt;3)-4-O-PO3(2-)-L-alpha-D-Hep-(1-&gt;5)-[alpha-Kdo-(2-&gt;4)]-alpha-Kdo-(2-&gt;6)-lipid A + ATP = alpha-D-Glc-(1-&gt;3)-[L-alpha-D-Hep-(1-&gt;7)]-4-O-PO3(2-)-L-alpha-D-Hep-(1-&gt;3)-4-O-PO3(2-)-L-alpha-D-Hep-(1-&gt;5)-[alpha-Kdo-(2-&gt;4)]-alpha-Kdo-(2-&gt;6)-lipid A + ADP + H(+). Its pathway is bacterial outer membrane biogenesis; LPS core biosynthesis. Its function is as follows. Kinase involved in the biosynthesis of the core oligosaccharide region of lipopolysaccharide (LPS). Catalyzes the phosphorylation of the second heptose unit (HepII) of the inner core. The protein is Lipopolysaccharide core heptose(II) kinase WaaY of Escherichia coli.